Here is a 79-residue protein sequence, read N- to C-terminus: Small ribosomal subunit protein uS17 (79 aa).

This sequence belongs to the universal ribosomal protein uS17 family. As to quaternary structure, part of the 30S ribosomal subunit.

In terms of biological role, one of the primary rRNA binding proteins, it binds specifically to the 5'-end of 16S ribosomal RNA. The chain is Small ribosomal subunit protein uS17 from Rhizobium etli (strain CIAT 652).